Consider the following 180-residue polypeptide: NADH-quinone oxidoreductase subunit I (180 aa).

2 consecutive 4Fe-4S ferredoxin-type domains span residues 48-80 and 90-119; these read IVLT…LQKA and EFFR…LTPD. 8 residues coordinate [4Fe-4S] cluster: C60, C63, C66, C70, C99, C102, C105, and C109. Over residues 161–174 the composition is skewed to basic and acidic residues; the sequence is KPKGDAEHEAKPID. Residues 161 to 180 are disordered; it reads KPKGDAEHEAKPIDVKSLLP.

It belongs to the complex I 23 kDa subunit family. As to quaternary structure, NDH-1 is composed of 14 different subunits. Subunits NuoA, H, J, K, L, M, N constitute the membrane sector of the complex. It depends on [4Fe-4S] cluster as a cofactor.

It is found in the cell inner membrane. The enzyme catalyses a quinone + NADH + 5 H(+)(in) = a quinol + NAD(+) + 4 H(+)(out). Its function is as follows. NDH-1 shuttles electrons from NADH, via FMN and iron-sulfur (Fe-S) centers, to quinones in the respiratory chain. The immediate electron acceptor for the enzyme in this species is believed to be ubiquinone. Couples the redox reaction to proton translocation (for every two electrons transferred, four hydrogen ions are translocated across the cytoplasmic membrane), and thus conserves the redox energy in a proton gradient. The protein is NADH-quinone oxidoreductase subunit I of Aeromonas salmonicida (strain A449).